The sequence spans 139 residues: Large-conductance mechanosensitive channel (139 aa).

The next 2 membrane-spanning stretches (helical) occupy residues 9–29 (AFAVKGNVVDMAVGIIIGAAF) and 79–99 (IQSVIDFVIVAFAIFMGVKAI).

The protein belongs to the MscL family. As to quaternary structure, homopentamer.

The protein resides in the cell inner membrane. Its function is as follows. Channel that opens in response to stretch forces in the membrane lipid bilayer. May participate in the regulation of osmotic pressure changes within the cell. This Pseudomonas fluorescens (strain SBW25) protein is Large-conductance mechanosensitive channel.